The primary structure comprises 352 residues: Schlafen-like protein 4 (352 aa).

The segment at 87-235 (FEYQSNFSEV…SDKVYQISSG (149 aa)) is SLFN-like fold. A helical transmembrane segment spans residues 326–343 (IQNIGWIFFGTALSCCIY).

Belongs to the Schlafen family. Component of the PUCH (precursor of 21U RNA 5'-end cleavage holoenzyme) complex; consisting of tofu-1, tofu-2 and either slfl-3 or slfl-4.

The protein resides in the membrane. In terms of biological role, component of the trimeric PUCH (precursor of 21U RNA 5'-end cleavage holoenzyme) complex, that acts as an endoribonuclease processing the 5'-end of precursor Piwi-interacting RNAs (piRNAs). The PUCH complex consists of tofu-1, tofu-2 and either slfl-3 or slfl-4, where tofu-2 exhibits endoribonuclease activity. PUCH-mediated processing strictly requires a 7-methyl-G cap (m7 G-cap) and an uracil at position three (U3). PUCH also exhibits a strict bias for piRNA precursors with an A or G at position 1. Mature piRNA production is enhanced by the interaction of PUCH with the PETISCO complex, which is stabilizing piRNA precursors and allows their processing by PUCH. The chain is Schlafen-like protein 4 from Caenorhabditis elegans.